We begin with the raw amino-acid sequence, 36 residues long: Pancreatic polypeptide (36 aa).

Residue Y36 is modified to Tyrosine amide.

The protein belongs to the NPY family.

It localises to the secreted. Its function is as follows. Hormone secreted by pancreatic cells that acts as a regulator of pancreatic and gastrointestinal functions probably by signaling through the G protein-coupled receptor NPY4R2. This is Pancreatic polypeptide (PPY) from Macaca mulatta (Rhesus macaque).